A 123-amino-acid polypeptide reads, in one-letter code: Phosphoribosyl-AMP cyclohydrolase (123 aa).

Residue Asp76 participates in Mg(2+) binding. Cys77 is a Zn(2+) binding site. Residues Asp78 and Asp80 each contribute to the Mg(2+) site. Cys93 and Cys100 together coordinate Zn(2+).

This sequence belongs to the PRA-CH family. Homodimer. The cofactor is Mg(2+). Requires Zn(2+) as cofactor.

The protein localises to the cytoplasm. The catalysed reaction is 1-(5-phospho-beta-D-ribosyl)-5'-AMP + H2O = 1-(5-phospho-beta-D-ribosyl)-5-[(5-phospho-beta-D-ribosylamino)methylideneamino]imidazole-4-carboxamide. Its pathway is amino-acid biosynthesis; L-histidine biosynthesis; L-histidine from 5-phospho-alpha-D-ribose 1-diphosphate: step 3/9. In terms of biological role, catalyzes the hydrolysis of the adenine ring of phosphoribosyl-AMP. The protein is Phosphoribosyl-AMP cyclohydrolase of Methanocorpusculum labreanum (strain ATCC 43576 / DSM 4855 / Z).